Reading from the N-terminus, the 229-residue chain is Large ribosomal subunit protein uL1 (229 aa).

This sequence belongs to the universal ribosomal protein uL1 family. In terms of assembly, part of the 50S ribosomal subunit.

Functionally, binds directly to 23S rRNA. The L1 stalk is quite mobile in the ribosome, and is involved in E site tRNA release. Its function is as follows. Protein L1 is also a translational repressor protein, it controls the translation of the L11 operon by binding to its mRNA. This Leifsonia xyli subsp. xyli (strain CTCB07) protein is Large ribosomal subunit protein uL1.